We begin with the raw amino-acid sequence, 771 residues long: MTQAAFDQASDNGPMTPSGSSFGLFAPAVVLLALISALATFLILMGLTPVVPTHQVVISVLLVNAAAVLILSAMVGREIWRIAKARARGRAAARLHIRIVGLFAVVSVVPAILVAVVASLTLDRGLDRWFSMRTQEIVASSVSVAQTYVREHALNIRGDILAMSADLTRLKSVYEGDRSRFNQILTAQAALRNLPGAMLIRRDLSVVERANVNIGREFIVPANLAIGDATPDQPVIYLPNDADYVAAVVPLKDYDDLYLYVARLIDPRVIGYLKTTQETLADYRSLEERRFGVQVAFALMYAVITLIVLLSAVWLGLNFSKWLVAPIRRLMSAADHVAEGNLDVRVPIYRAEGDLASLAETFNKMTHELRSQREAILTARDQIDSRRRFTEAVLSGVGAGVIGLDSQERITILNRSAERLLGLSEVEALHRHLAEVVPETAGLLEEAEHARQRSVQGNITLTRDGRERVFAVRVTTEQSPEAEHGWVVTLDDITELISAQRTSAWADVARRIAHEIKNPLTPIQLSAERLKRKFGRHVTQDREIFDQCTDTIIRQVGDIGRMVDEFSSFARMPKPVVDSQDMSEIIRQTVFLMRVGHPEVVFDSEVPPAMPARFDRRLVSQALTNILKNAAEAIEAVPPDVRGQGRIRVSANRVGEDLVIDIIDNGTGLPQESRNRLLEPYVTTREKGTGLGLAIVGKIMEEHGGGIELNDAPEGRGAWIRLTLKAEGPKAEPTDASTKATGAATPAAPAASAMARDAAADSAARGKNERT.

Helical transmembrane passes span phenylalanine 22–glycine 46, valine 56–glycine 76, isoleucine 99–leucine 122, and valine 295–phenylalanine 319. Positions lysine 321 to glutamate 374 constitute an HAMP domain. One can recognise a PAS domain in the interval arginine 386 to asparagine 458. The Histidine kinase domain occupies arginine 511 to glycine 728. Histidine 514 carries the phosphohistidine; by autocatalysis modification. Residues glutamate 727–threonine 771 are disordered. The segment covering alanine 740–alanine 763 has biased composition (low complexity).

It localises to the cell membrane. It catalyses the reaction ATP + protein L-histidine = ADP + protein N-phospho-L-histidine.. Functionally, member of the two-component regulatory system NtrY/NtrX involved in nitrogen level control. Probably activates NtrX by phosphorylation. The chain is Nitrogen regulation protein NtrY (ntrY) from Azorhizobium caulinodans (strain ATCC 43989 / DSM 5975 / JCM 20966 / LMG 6465 / NBRC 14845 / NCIMB 13405 / ORS 571).